The sequence spans 131 residues: Superoxide dismutase [Ni] (131 aa).

A propeptide spanning residues 1 to 14 (MLSRLFAPKVTVSA) is cleaved from the precursor. Histidine 15, cysteine 16, and cysteine 20 together coordinate Ni(2+).

It belongs to the nickel superoxide dismutase family. In terms of assembly, homohexamer. The hexameric protein has a roughly the shape of a hollow sphere with an outer diameter of 60 angstroms and a large interior cavity. Ni(2+) is required as a cofactor.

It localises to the cytoplasm. The catalysed reaction is 2 superoxide + 2 H(+) = H2O2 + O2. This chain is Superoxide dismutase [Ni] (sodN), found in Streptomyces coelicolor (strain ATCC BAA-471 / A3(2) / M145).